The following is a 190-amino-acid chain: Large ribosomal subunit protein bL9 (190 aa).

It belongs to the bacterial ribosomal protein bL9 family.

Functionally, binds to the 23S rRNA. This chain is Large ribosomal subunit protein bL9, found in Rhodobacter capsulatus (strain ATCC BAA-309 / NBRC 16581 / SB1003).